The chain runs to 106 residues: Large ribosomal subunit protein P1A (106 aa).

The segment at Ala74–Asp106 is disordered. The segment covering Glu82–Met100 has biased composition (acidic residues).

The protein belongs to the eukaryotic ribosomal protein P1/P2 family. As to quaternary structure, component of the large ribosomal subunit (LSU). Mature ribosomes consist of a small (40S) and a large (60S) subunit. The 40S subunit contains about 32 different proteins and 1 molecule of RNA (18S). The 60S subunit contains 45 different proteins and 3 molecules of RNA (25S, 5.8S and 5S). The 5 acidic ribosomal P-proteins form the stalk structure of the 60S subunit. They are organized as a pentameric complex in which uL10/P0 interacts with 2 heterodimers, P1A-P2B and P1B-P2A. Phosphorylated.

Its subcellular location is the cytoplasm. In terms of biological role, component of the ribosome, a large ribonucleoprotein complex responsible for the synthesis of proteins in the cell. The small ribosomal subunit (SSU) binds messenger RNAs (mRNAs) and translates the encoded message by selecting cognate aminoacyl-transfer RNA (tRNA) molecules. The large subunit (LSU) contains the ribosomal catalytic site termed the peptidyl transferase center (PTC), which catalyzes the formation of peptide bonds, thereby polymerizing the amino acids delivered by tRNAs into a polypeptide chain. The nascent polypeptides leave the ribosome through a tunnel in the LSU and interact with protein factors that function in enzymatic processing, targeting, and the membrane insertion of nascent chains at the exit of the ribosomal tunnel. The protein is Large ribosomal subunit protein P1A (RPP1A) of Candida albicans (strain SC5314 / ATCC MYA-2876) (Yeast).